The following is a 327-amino-acid chain: Malate dehydrogenase (327 aa).

11-17 lines the NAD(+) pocket; that stretch reads GAAGQIS. Positions 92 and 98 each coordinate substrate. Residues Asn105, Gln112, and 129-131 each bind NAD(+); that span reads VGN. The substrate site is built by Asn131 and Arg162. Catalysis depends on His187, which acts as the Proton acceptor.

The protein belongs to the LDH/MDH superfamily. MDH type 2 family.

The catalysed reaction is (S)-malate + NAD(+) = oxaloacetate + NADH + H(+). In terms of biological role, catalyzes the reversible oxidation of malate to oxaloacetate. This is Malate dehydrogenase from Cellvibrio japonicus (strain Ueda107) (Pseudomonas fluorescens subsp. cellulosa).